The sequence spans 253 residues: Putative cysteine-rich repeat secretory protein 33 (253 aa).

Positions 1 to 28 (MFSSYSLCKCLVSFHILAIQVLISCASS) are cleaved as a signal peptide. Gnk2-homologous domains lie at 34–133 (EYLN…MIND) and 141–250 (YDNI…LYPF).

This sequence belongs to the cysteine-rich repeat secretory protein family.

It localises to the secreted. This chain is Putative cysteine-rich repeat secretory protein 33 (CRRSP33), found in Arabidopsis thaliana (Mouse-ear cress).